We begin with the raw amino-acid sequence, 444 residues long: 23S rRNA (uracil(1939)-C(5))-methyltransferase RlmD (444 aa).

The 63-residue stretch at 5 to 67 folds into the TRAM domain; it reads RNRLDRTPFQ…RHFDEAKTVG (63 aa). Cys-80, Cys-86, Cys-89, and Cys-168 together coordinate [4Fe-4S] cluster. Gln-276, Phe-305, Asn-310, Glu-326, Asp-353, and Asp-374 together coordinate S-adenosyl-L-methionine. Cys-400 acts as the Nucleophile in catalysis.

It belongs to the class I-like SAM-binding methyltransferase superfamily. RNA M5U methyltransferase family. RlmD subfamily.

The catalysed reaction is uridine(1939) in 23S rRNA + S-adenosyl-L-methionine = 5-methyluridine(1939) in 23S rRNA + S-adenosyl-L-homocysteine + H(+). Functionally, catalyzes the formation of 5-methyl-uridine at position 1939 (m5U1939) in 23S rRNA. This chain is 23S rRNA (uracil(1939)-C(5))-methyltransferase RlmD, found in Xanthomonas axonopodis pv. citri (strain 306).